A 34-amino-acid polypeptide reads, in one-letter code: Potassium channel toxin alpha-KTx 6.17 (34 aa).

4 disulfides stabilise this stretch: cysteine 3–cysteine 24, cysteine 9–cysteine 29, cysteine 13–cysteine 31, and cysteine 19–cysteine 34.

The protein belongs to the short scorpion toxin superfamily. Potassium channel inhibitor family. Alpha-KTx 06 subfamily. As to expression, expressed by the venom gland.

It localises to the secreted. Its function is as follows. This toxin reversibly blocks Shaker B potassium-channels (expressed in insect Sf9 cells) with a Kd of 96.6 nM, and presents an even better affinity toward hKv1.3 (KCNA3), blocking it with a Kd of 17.7 nM. The sequence is that of Potassium channel toxin alpha-KTx 6.17 from Opisthacanthus cayaporum (South American scorpion).